The sequence spans 421 residues: Serine hydroxymethyltransferase (421 aa).

(6S)-5,6,7,8-tetrahydrofolate contacts are provided by residues L120 and 124 to 126; that span reads GHL. At K229 the chain carries N6-(pyridoxal phosphate)lysine. 354-356 contributes to the (6S)-5,6,7,8-tetrahydrofolate binding site; that stretch reads SPF.

Belongs to the SHMT family. Homodimer. The cofactor is pyridoxal 5'-phosphate.

It localises to the cytoplasm. The enzyme catalyses (6R)-5,10-methylene-5,6,7,8-tetrahydrofolate + glycine + H2O = (6S)-5,6,7,8-tetrahydrofolate + L-serine. The protein operates within one-carbon metabolism; tetrahydrofolate interconversion. It functions in the pathway amino-acid biosynthesis; glycine biosynthesis; glycine from L-serine: step 1/1. Functionally, catalyzes the reversible interconversion of serine and glycine with tetrahydrofolate (THF) serving as the one-carbon carrier. This reaction serves as the major source of one-carbon groups required for the biosynthesis of purines, thymidylate, methionine, and other important biomolecules. Also exhibits THF-independent aldolase activity toward beta-hydroxyamino acids, producing glycine and aldehydes, via a retro-aldol mechanism. The protein is Serine hydroxymethyltransferase of Opitutus terrae (strain DSM 11246 / JCM 15787 / PB90-1).